The following is a 585-amino-acid chain: MIFPAEDVYFWSKFFATERAVSGVIIIFIYLGITSIFSYVLSFYIAKIYRDEPTFLRKLTGSVISFFEKIIGESENHQMEFKEYFINLLLFNFFAGLISFLVIMYQKYLPFSYYATGMSPSLDFNTVVSFLTNTNLQHYSNPFRLSYFSQTFVITGLMFLSAGTGFAASMAFVRGLRTDVGKIGNFYHDFLVSIFDLILPLSILVTIILILAGVPETIQRFISVTPFFTNNTVNIPLGPVATLEAIKNIGTNGGGFYGANAGFPFENPDWFTNLLEFVSFTIIPLGSLMALGIVFEDRKFGRMLYYVIMFFFVFDGLFAFFGEYVGVPFLHIGYYTGNMLGKETAIGVSQSSIFAVGATLTSTGASDGALVSYTPAGIIGVLIGLLLNDPLGGVGTGVLNIFMYIIFTVFIGSLMVGKLPELMSLRIGSKEIKYSTLSLVTHPLLVVIPLGITLMIPHLSSTFVNPNSSRITELLYEFASAASNNGSEMGGFLTNQPYFNYLDGVIMLLGRYLLMGFQLVIAQSFSIKKAKVQYLRSIDTSNSVFALLLISAMLIIGLLSYFPIIVLGPLLSWTHDFSLIVGAIL.

A run of 12 helical transmembrane segments spans residues 25–45 (IIIF…SFYI), 84–104 (YFIN…LVIM), 152–172 (FVIT…SMAF), 194–214 (IFDL…LAGV), 275–295 (LEFV…GIVF), 307–327 (VIMF…YVGV), 345–365 (AIGV…STGA), 368–388 (GALV…LLLN), 397–417 (GVLN…LMVG), 437–457 (LSLV…LMIP), 502–522 (LDGV…LVIA), and 547–567 (LLLI…IIVL).

Belongs to the KdpA family. The system is composed of three essential subunits: KdpA, KdpB and KdpC.

It localises to the cell membrane. Functionally, part of the high-affinity ATP-driven potassium transport (or Kdp) system, which catalyzes the hydrolysis of ATP coupled with the electrogenic transport of potassium into the cytoplasm. This subunit binds the extracellular potassium ions and delivers the ions to the membrane domain of KdpB through an intramembrane tunnel. This chain is Potassium-transporting ATPase potassium-binding subunit, found in Thermoplasma volcanium (strain ATCC 51530 / DSM 4299 / JCM 9571 / NBRC 15438 / GSS1).